The following is a 230-amino-acid chain: 7-cyano-7-deazaguanine synthase (230 aa).

Residue 16 to 26 participates in ATP binding; that stretch reads LSGGLDSATVV. Zn(2+) contacts are provided by Cys-195, Cys-205, Cys-208, and Cys-211.

Belongs to the QueC family. It depends on Zn(2+) as a cofactor.

The enzyme catalyses 7-carboxy-7-deazaguanine + NH4(+) + ATP = 7-cyano-7-deazaguanine + ADP + phosphate + H2O + H(+). It participates in purine metabolism; 7-cyano-7-deazaguanine biosynthesis. Catalyzes the ATP-dependent conversion of 7-carboxy-7-deazaguanine (CDG) to 7-cyano-7-deazaguanine (preQ(0)). This is 7-cyano-7-deazaguanine synthase from Pseudomonas fluorescens (strain Pf0-1).